A 902-amino-acid polypeptide reads, in one-letter code: Leucine-rich repeat-containing G-protein coupled receptor 5 (902 aa).

The first 22 residues, 1 to 22 (MDTSKTSFFLFSVLCSLQLVGA), serve as a signal peptide directing secretion. Residues 23-558 (ARPGKQQRSC…HLFGSWLTRT (536 aa)) are Extracellular-facing. 2 cysteine pairs are disulfide-bonded: C32–C38 and C36–C49. The LRRNT domain occupies 32 to 61 (CPTPCECEQEGMLVRVDCSDRALTSLPRNL). LRR repeat units lie at residues 41–61 (EGML…PRNL), 62–85 (SIFT…VMHN), 86–109 (LHFL…AFAG), 111–133 (GSLK…ALHN), 134–157 (LRSL…SFNG), 159–181 (FSLR…ALES), 182–205 (LSAL…AFRN), 207–229 (SSLV…CFDG), 230–253 (LHSL…IKTL), 254–276 (KNLK…AFIG), 278–300 (PSLI…AFQH), 302–324 (PELR…LTGT), 325–347 (TSLE…VCTQ), 348–372 (LPNL…GCQR), 374–393 (QKID…TFQQ), 394–417 (LVGL…SFSS), and 418–441 (LPSL…GLHG). N-linked (GlcNAc...) asparagine glycosylation is found at N60 and N74. N205 carries N-linked (GlcNAc...) asparagine glycosylation. C345 and C370 are joined by a disulfide. C476 and C537 are disulfide-bonded. Residue N496 is glycosylated (N-linked (GlcNAc...) asparagine). Residues 559–579 (GVWLIVLLSFVCNALVIATVF) form a helical membrane-spanning segment. Residues 580-589 (RPLSYVPSIK) lie on the Cytoplasmic side of the membrane. A helical transmembrane segment spans residues 590–610 (LLIGLIAIMNTLMGLSSGVLA). The stretch at 598-619 (MNTLMGLSSGVLATVDALTFGN) is one LRR 18 repeat. The Extracellular portion of the chain corresponds to 611–634 (TVDALTFGNFAQYGAWWESGVGCQ). C633 and C708 are disulfide-bonded. A helical membrane pass occupies residues 635–655 (ITGFLSVFAAETSIFLLTVAA). The Cytoplasmic segment spans residues 656–678 (LERGFSIKCTTKFETKSSFINVK). A helical transmembrane segment spans residues 679 to 699 (LSIVFCFLLSIVIAVSPLLSG). Topologically, residues 700 to 718 (STYGTSPLCFPLLFGDPSS) are extracellular. Residues 719–739 (MGFMVALVLLNSLCFLVMTIA) form a helical membrane-spanning segment. The Cytoplasmic portion of the chain corresponds to 740–763 (YTKLYCSLEKGELENIWDCSMVKH). The helical transmembrane segment at 764–784 (IALLLFTNCILYCPVAFLSFS) threads the bilayer. Topologically, residues 785 to 798 (SLLNLTFISPEVNK) are extracellular. N-linked (GlcNAc...) asparagine glycans are attached at residues N788 and N797. Residues 799–819 (SILLLIIPLPACLNPLLYILF) form a helical membrane-spanning segment. Residues 820-902 (NPHFKEDIGS…LSAVAFVPCH (83 aa)) lie on the Cytoplasmic side of the membrane.

The protein belongs to the G-protein coupled receptor 1 family.

Its subcellular location is the cell membrane. The protein resides in the golgi apparatus. It is found in the trans-Golgi network membrane. Functionally, receptor for R-spondins that potentiates the canonical Wnt signaling pathway and acts as a stem cell marker of the intestinal epithelium and the hair follicle. Upon binding to R-spondins (RSPO1, RSPO2, RSPO3 or RSPO4), associates with phosphorylated LRP6 and frizzled receptors that are activated by extracellular Wnt receptors, triggering the canonical Wnt signaling pathway to increase expression of target genes. In contrast to classical G-protein coupled receptors, does not activate heterotrimeric G-proteins to transduce the signal. Involved in the development and/or maintenance of the adult intestinal stem cells during postembryonic development. The polypeptide is Leucine-rich repeat-containing G-protein coupled receptor 5 (lgr5) (Xenopus tropicalis (Western clawed frog)).